Here is an 890-residue protein sequence, read N- to C-terminus: DNA mismatch repair protein MutS (890 aa).

Glycine 634–serine 641 lines the ATP pocket.

The protein belongs to the DNA mismatch repair MutS family.

This protein is involved in the repair of mismatches in DNA. It is possible that it carries out the mismatch recognition step. This protein has a weak ATPase activity. The polypeptide is DNA mismatch repair protein MutS (Burkholderia pseudomallei (strain 1710b)).